A 587-amino-acid polypeptide reads, in one-letter code: A-type ATP synthase subunit A (587 aa).

An ATP-binding site is contributed by 234 to 241 (GPFGSGKT).

It belongs to the ATPase alpha/beta chains family. As to quaternary structure, the N-terminus (approximately residues 106-122) interacts with subunit H. Has multiple subunits with at least A(3), B(3), C, D, E(1 or 2), F, H(2), I and proteolipid K(x).

It is found in the cell membrane. The catalysed reaction is ATP + H2O + 4 H(+)(in) = ADP + phosphate + 5 H(+)(out). ATP hydrolysis is inhibited by N',N'-dicyclohexylcarbodiimide. Functionally, component of the A-type ATP synthase that produces ATP from ADP in the presence of a proton gradient across the membrane. The A chain is the catalytic subunit. Hydrolyzes ATP, GTP (86% of ATPase rate) and UTP (54% of ATPase rate), has very poor activity on CTP. The chain is A-type ATP synthase subunit A from Methanocaldococcus jannaschii (strain ATCC 43067 / DSM 2661 / JAL-1 / JCM 10045 / NBRC 100440) (Methanococcus jannaschii).